Reading from the N-terminus, the 721-residue chain is Angiomotin-like 2a (721 aa).

Residues 35–84 form a disordered region; the sequence is QQALRGGSSGGGAGSPRSSLESLTQEESLSPQLSARQEPQGQEHQGDFQH. A compositionally biased stretch (low complexity) spans 49–68; the sequence is SPRSSLESLTQEESLSPQLS. Y103 is subject to Phosphotyrosine; by FGFR1. Positions 169 to 214 are disordered; that stretch reads DNIPMSSSHSYPQLSNNHSDTVVNEQSVHQPDQRGPPPEYPFMVRS. A compositionally biased stretch (polar residues) spans 172-198; the sequence is PMSSSHSYPQLSNNHSDTVVNEQSVHQ. A coiled-coil region spans residues 275–531; sequence ANNFQMEQLI…TRWEQKYLEE (257 aa). Polar residues predominate over residues 554–567; it reads INHSPRNSPNSSFN. Disordered regions lie at residues 554–575 and 666–709; these read INHS…SPNH and DSST…TQIS. A compositionally biased stretch (low complexity) spans 688–702; sequence SAPEPSTASSSESTS. The PDZ-binding motif lies at 718–721; the sequence is EILI.

Belongs to the angiomotin family. Interacts with SRC. Post-translationally, phosphorylation at Tyr-103 is necessary for efficient binding to SRC and synergistically functioning with SRC to activate the downstream MAPK pathway. Expressed in endothelial cells.

It localises to the recycling endosome. The protein resides in the cytoplasm. The protein localises to the cell projection. It is found in the podosome. Its subcellular location is the cell junction. In terms of biological role, required for proper architecture of actin filaments and for cell movements during embryogenesis. Plays a role in the radial actin fiber architecture in skin epithelial cells, thereby maintains cell geometry, size and cell interconnectivity within the skin. Plays an important role in coupling actin fibers to cell junctions in endothelial cells and is therefore required for correct endothelial cell morphology and maintenance of dorsal aorta lumen expansion during embryogenesis. May further play a role in the polarity, proliferation and migration of endothelial cells, and therefore participates in angiogenesis. Inhibits the Wnt/beta-catenin signaling pathway, probably by recruiting CTNNB1 to recycling endosomes and hence preventing its translocation to the nucleus. Regulates the translocation of phosphorylated SRC to peripheral cell-matrix adhesion sites. Selectively promotes FGF-induced MAPK activation through SRC. This chain is Angiomotin-like 2a (amotl2a), found in Danio rerio (Zebrafish).